A 115-amino-acid polypeptide reads, in one-letter code: Putative TGFB1-induced anti-apoptotic factor 1 (115 aa).

As to expression, not detectable in normal kidney and liver. Up-regulated in chronic and acute allograft rejection: expressed in the inflammatory infiltrate and in tubular epithelial cells.

It localises to the nucleus. In terms of biological role, inhibits the cytotoxic effects of TNF-alpha and overexpressed TNF receptor adapters TRADD, FADD, and RIPK1. Involved in TGF-beta1 inhibition of IkappaB-alpha expression and suppression of TNF-mediated IkappaB-alpha degradation. In Homo sapiens (Human), this protein is Putative TGFB1-induced anti-apoptotic factor 1 (MYO18A).